We begin with the raw amino-acid sequence, 356 residues long: uncharacterized protein (356 aa).

This is an uncharacterized protein from Bacillus subtilis (strain 168).